A 329-amino-acid chain; its full sequence is DNA-directed RNA polymerase subunit alpha (329 aa).

Positions Met1 to Arg235 are alpha N-terminal domain (alpha-NTD). The interval Phe249–Asp329 is alpha C-terminal domain (alpha-CTD).

The protein belongs to the RNA polymerase alpha chain family. In terms of assembly, homodimer. The RNAP catalytic core consists of 2 alpha, 1 beta, 1 beta' and 1 omega subunit. When a sigma factor is associated with the core the holoenzyme is formed, which can initiate transcription.

The catalysed reaction is RNA(n) + a ribonucleoside 5'-triphosphate = RNA(n+1) + diphosphate. In terms of biological role, DNA-dependent RNA polymerase catalyzes the transcription of DNA into RNA using the four ribonucleoside triphosphates as substrates. In Aliivibrio salmonicida (strain LFI1238) (Vibrio salmonicida (strain LFI1238)), this protein is DNA-directed RNA polymerase subunit alpha.